Consider the following 379-residue polypeptide: Junctional adhesion molecule-like (379 aa).

The signal sequence occupies residues 1–20; it reads MLCLLKLIVIPVILAPVGYP. At 21–281 the chain is on the extracellular side; it reads QGLPGLTVSS…QQGILNGNQL (261 aa). 2 Ig-like V-type domains span residues 24–135 and 140–250; these read PGLT…KPVE and PEEP…KTIV. C45 and C119 are joined by a disulfide. N-linked (GlcNAc...) asparagine glycosylation is found at N79, N89, and N125. Residues C158 and C236 are joined by a disulfide bond. The helical transmembrane segment at 282-302 threads the bilayer; that stretch reads VIIVGIVCATFLLLPVLILIV. The Cytoplasmic portion of the chain corresponds to 303–379; the sequence is KKAKWNKSSV…SLVRSSVRSK (77 aa). Position 355 is a phosphotyrosine (Y355).

It belongs to the immunoglobulin superfamily. Homodimer; active form in leukocyte-endothelial cell adhesion. Interacts (homodimeric form) with CXADR. Interacts (via cytoplasmic domain) with the PI3 kinase; upon CXADR-binding. Interacts with ITGA4 and ITGB1; integrin alpha-4/beta-1 may regulate leukocyte to endothelial cells adhesion by controlling JAML homodimerization. In terms of tissue distribution, expressed by gamma-delta intraepithelial T cells (at protein level).

The protein localises to the cell membrane. It localises to the cell junction. Functionally, transmembrane protein of the plasma membrane of leukocytes that control their migration and activation through interaction with CXADR, a plasma membrane receptor found on adjacent epithelial and endothelial cells. The interaction between both receptors mediates the activation of gamma-delta T-cells, a subpopulation of T-cells residing in epithelia and involved in tissue homeostasis and repair. Upon epithelial CXADR-binding, JAML induces downstream cell signaling events in gamma-delta T-cells through PI3-kinase and MAP kinases. It results in proliferation and production of cytokines and growth factors by T-cells that in turn stimulate epithelial tissues repair. It also controls the transmigration of leukocytes within epithelial and endothelial tissues through adhesive interactions with epithelial and endothelial CXADR. The protein is Junctional adhesion molecule-like of Mus musculus (Mouse).